Reading from the N-terminus, the 205-residue chain is MNKILVDSPFSPDHQKCCPKLFTISAPAGVGKTTLVRMLEQEFSSAFAETISVTTRKPREGEVPGKDYHFVSHEEFQRLLDRQALLEWVFLFGECYGTSMLEIERIWSLGKHAVAVIDIQGALFIRSRMPSVSIFIAPPSQEELERRLASRGSEEGSQRKERLEHSLIELAAANQFDYVIINDDLNQAYRVLKSIFIAEEHRNIL.

The Guanylate kinase-like domain maps to 19–197 (PKLFTISAPA…AYRVLKSIFI (179 aa)). Position 26–33 (26–33 (APAGVGKT)) interacts with ATP.

Belongs to the guanylate kinase family.

It localises to the cytoplasm. The enzyme catalyses GMP + ATP = GDP + ADP. Its function is as follows. Essential for recycling GMP and indirectly, cGMP. This is Guanylate kinase (gmk) from Chlamydia pneumoniae (Chlamydophila pneumoniae).